Consider the following 475-residue polypeptide: NADH-quinone oxidoreductase subunit N 1 (475 aa).

14 helical membrane passes run 8–28 (VMPL…EAAT), 36–56 (LFAI…PSEP), 67–87 (GGFF…ITLI), 100–120 (GEYY…SAAA), 122–142 (LTIL…LAGI), 157–177 (FLLG…IYGA), 199–219 (FLSG…AVPF), 244–264 (AAAL…LETF), 268–288 (PTAI…AALI), 295–315 (MFAY…ATGT), 322–342 (VLYY…IIIL), 366–386 (AFLM…GGFI), 403–423 (LAVA…RVVI), and 443–463 (ATIA…SLLI).

Belongs to the complex I subunit 2 family. NDH-1 is composed of 14 different subunits. Subunits NuoA, H, J, K, L, M, N constitute the membrane sector of the complex.

Its subcellular location is the cell inner membrane. The enzyme catalyses a quinone + NADH + 5 H(+)(in) = a quinol + NAD(+) + 4 H(+)(out). Functionally, NDH-1 shuttles electrons from NADH, via FMN and iron-sulfur (Fe-S) centers, to quinones in the respiratory chain. The immediate electron acceptor for the enzyme in this species is believed to be a menaquinone. Couples the redox reaction to proton translocation (for every two electrons transferred, four hydrogen ions are translocated across the cytoplasmic membrane), and thus conserves the redox energy in a proton gradient. This Chloroherpeton thalassium (strain ATCC 35110 / GB-78) protein is NADH-quinone oxidoreductase subunit N 1.